Consider the following 775-residue polypeptide: BLOC-2 complex member HPS6 (775 aa).

In terms of assembly, component of the biogenesis of lysosome-related organelles complex-2 (or BLOC2) composed of HPS3, HPS5 and HPS6. Interacts with HPS5 and HPS3. Interacts with biogenesis of lysosome-related organelles complex-1 (BLOC1). Interacts with AP-3 complex. Interacts with MNAT1. Interacts with DCTN1 and dynein intermediate chain. In terms of tissue distribution, ubiquitous.

The protein localises to the microsome membrane. It localises to the cytoplasm. The protein resides in the cytosol. Its subcellular location is the early endosome membrane. It is found in the lysosome membrane. Its function is as follows. May regulate the synthesis and function of lysosomes and of highly specialized organelles, such as melanosomes and platelet dense granules. Acts as a cargo adapter for the dynein-dynactin motor complex to mediate the transport of lysosomes from the cell periphery to the perinuclear region. Facilitates retrograde lysosomal trafficking by linking the motor complex to lysosomes, and perinuclear positioning of lysosomes is crucial for the delivery of endocytic cargos to lysosomes, for lysosome maturation and functioning. This Homo sapiens (Human) protein is BLOC-2 complex member HPS6 (HPS6).